We begin with the raw amino-acid sequence, 836 residues long: Protein O-mannosyl-transferase TMTC2 (836 aa).

A helical membrane pass occupies residues 1–21 (MIAELVSSALGLALYLNTLSA). At 22–77 (DFCYDDSRAIKTNQDLLPETPWTHIFYNDFWGTLLTHSGSHKSYRPLCTLSFRLNH) the chain is on the extracellular side. The helical transmembrane segment at 78 to 98 (AIGGLNPWSYHLVNVLLHAAV) threads the bilayer. At 99-107 (TGLFTRFSK) the chain is on the cytoplasmic side. Residues 108–128 (ALLGDGYWTFMAGLMFASHPI) traverse the membrane as a helical segment. Residues 129 to 132 (HTEA) are Extracellular-facing. Residues 133–153 (VAGIVGRADVGASLFFLLSLL) traverse the membrane as a helical segment. Residues 154–168 (CYIKHCSTRGYSART) lie on the Cytoplasmic side of the membrane. 2 helical membrane passes run 169 to 184 (WGWF…CSML) and 185 to 204 (WKEQ…VFVF). Over 205-220 (HRLKMKQILPTIYKRK) the chain is Cytoplasmic. The chain crosses the membrane as a helical span at residues 221 to 241 (NLSLFLSISLLTFWGTCLLGA). The Extracellular segment spans residues 242–312 (RLYWMGNKPP…KTVCDWRNLH (71 aa)). Residues 313–333 (TVAFYSGLLLLAYCGLKNPSL) form a helical membrane-spanning segment. The Cytoplasmic portion of the chain corresponds to 334–392 (EGECNGKALTNGKQNANGHSCHSDVEYRNSEMKPSFASKVENGIKNCVPQRTQLPSTEN). A helical membrane pass occupies residues 393 to 415 (IVILSLSLLIIPFIPATNLFFYV). Over 416-422 (GFVIAER) the chain is Extracellular. Residues 423-443 (VLYIPSMGFCLLITVGARALY) form a helical membrane-spanning segment. Over 444 to 449 (VKVQKR) the chain is Cytoplasmic. Residues 450 to 470 (FLKSLVFYATATLIVFYGVKT) form a helical membrane-spanning segment. Residues 471-836 (AIRNGDWQNE…EKQGLKTSKT (366 aa)) lie on the Extracellular side of the membrane. 9 TPR repeats span residues 493–526 (AKAW…RSNM), 527–560 (ADML…RPTL), 561–594 (ASAY…PDEN), 606–639 (TSCL…MPRH), 643–676 (QSLY…KTDH), 677–710 (IPAH…DPTK), 711–744 (GNCY…DNTE), 745–778 (FDVV…RPNY), and 779–812 (PAAL…KPDD).

It belongs to the TMTC family.

It is found in the membrane. It localises to the endoplasmic reticulum. The enzyme catalyses a di-trans,poly-cis-dolichyl beta-D-mannosyl phosphate + L-seryl-[protein] = 3-O-(alpha-D-mannosyl)-L-seryl-[protein] + a di-trans,poly-cis-dolichyl phosphate + H(+). It carries out the reaction a di-trans,poly-cis-dolichyl beta-D-mannosyl phosphate + L-threonyl-[protein] = 3-O-(alpha-D-mannosyl)-L-threonyl-[protein] + a di-trans,poly-cis-dolichyl phosphate + H(+). It functions in the pathway protein modification; protein glycosylation. In terms of biological role, transfers mannosyl residues to the hydroxyl group of serine or threonine residues. The 4 members of the TMTC family are O-mannosyl-transferases dedicated primarily to the cadherin superfamily, each member seems to have a distinct role in decorating the cadherin domains with O-linked mannose glycans at specific regions. Also acts as O-mannosyl-transferase on other proteins such as PDIA3. In Mus musculus (Mouse), this protein is Protein O-mannosyl-transferase TMTC2.